The following is a 24-amino-acid chain: Superoxide dismutase [Cu-Zn], chloroplastic (24 aa).

Belongs to the Cu-Zn superoxide dismutase family. As to quaternary structure, homodimer. The cofactor is Cu cation. It depends on Zn(2+) as a cofactor.

It is found in the plastid. The protein resides in the chloroplast. It catalyses the reaction 2 superoxide + 2 H(+) = H2O2 + O2. Functionally, destroys radicals which are normally produced within the cells and which are toxic to biological systems. In Picea abies (Norway spruce), this protein is Superoxide dismutase [Cu-Zn], chloroplastic.